A 194-amino-acid chain; its full sequence is Imidazoleglycerol-phosphate dehydratase (194 aa).

Belongs to the imidazoleglycerol-phosphate dehydratase family.

The protein localises to the cytoplasm. It catalyses the reaction D-erythro-1-(imidazol-4-yl)glycerol 3-phosphate = 3-(imidazol-4-yl)-2-oxopropyl phosphate + H2O. It participates in amino-acid biosynthesis; L-histidine biosynthesis; L-histidine from 5-phospho-alpha-D-ribose 1-diphosphate: step 6/9. This Lacticaseibacillus casei (strain BL23) (Lactobacillus casei) protein is Imidazoleglycerol-phosphate dehydratase.